The chain runs to 474 residues: Capsid vertex component 1 (474 aa).

This sequence belongs to the herpesviridae CVC1 protein family. As to quaternary structure, interacts (via C-terminus) with capsid vertex component 2/CVC2.

It localises to the virion. Its subcellular location is the host nucleus. Its function is as follows. Capsid vertex-specific component that plays a role during viral DNA encapsidation, assuring correct genome cleavage and presumably stabilizing capsids that contain full-length viral genomes. The sequence is that of Capsid vertex component 1 from Alcelaphine herpesvirus 1 (strain C500) (AlHV-1).